A 175-amino-acid polypeptide reads, in one-letter code: Large ribosomal subunit protein uL16 (175 aa).

This sequence belongs to the universal ribosomal protein uL16 family.

The chain is Large ribosomal subunit protein uL16 from Caldivirga maquilingensis (strain ATCC 700844 / DSM 13496 / JCM 10307 / IC-167).